We begin with the raw amino-acid sequence, 611 residues long: Pyrichalasin H cluster regulator pyiR (611 aa).

The segment at residues 11-47 is a DNA-binding region (zn(2)-C6 fungal-type); the sequence is CDRCRGHKLRCIRLDPGPNDTGALLPCKRCVKAGAEC. 6 disordered regions span residues 53–128, 169–192, 265–291, 401–427, 521–550, and 564–593; these read LSVK…LPPW, ALAA…DGTT, GGAG…GRSS, AHEG…AAPQ, RGGL…SDER, and SWFT…RTVE. The segment covering 59–69 has biased composition (basic and acidic residues); it reads GDGHHSAHRAT. Low complexity predominate over residues 98–109; it reads PTQPAPQRQTQR. Positions 265–279 are enriched in polar residues; it reads GGAGSQSLRDQQMQQ. Residues 572–587 are compositionally biased toward gly residues; that stretch reads GGSGGSGPGEGTGDSN.

The protein resides in the nucleus. In terms of biological role, transcription factor that specifically regulates the expression of the gene cluster that mediates the biosynthesis of the mycotoxin pyrichalasin H, a tyrosine-derived cytochalasan that inhibits the growth of rice seedlings, but also inhibits lymphocyte capping and actin polymerization and alters cell morphology. Pyrichalasin H is indicated as the responsible agent for the genus-specific pathogenicity of M.grisea toward crabgrass. The protein is Pyrichalasin H cluster regulator pyiR of Pyricularia grisea (Crabgrass-specific blast fungus).